Reading from the N-terminus, the 103-residue chain is MYAVIQSGGKQHRVVEGETLKVELLKAETGSTITFDDVLMVVSGESVQIGAPVVAGAKVTAEVVGHGRHDKIRIIKMRRRKHYRKQQGHRQWFTELKITGISG.

Belongs to the bacterial ribosomal protein bL21 family. Part of the 50S ribosomal subunit. Contacts protein L20.

In terms of biological role, this protein binds to 23S rRNA in the presence of protein L20. The polypeptide is Large ribosomal subunit protein bL21 (Acinetobacter baylyi (strain ATCC 33305 / BD413 / ADP1)).